The primary structure comprises 459 residues: uncharacterized protein (459 aa).

Helical transmembrane passes span 53 to 75 (IPLL…GLTL) and 111 to 133 (ARIA…CLCA). The interval 174 to 196 (HLDNPSAPHPSENPQSRAHPKQN) is disordered.

It is found in the cell membrane. This is an uncharacterized protein from Treponema pallidum (strain Nichols).